The following is a 54-amino-acid chain: Apelin receptor early endogenous ligand (54 aa).

Positions 1–23 are cleaved as a signal peptide; the sequence is MRFQPLFWVFFIFAMSLLFISEQ.

The protein belongs to the Elabela/Toddler family. Interacts with APLNR. In terms of tissue distribution, expressed in the placenta. Expressed in syncytiotrophoblasts of the placenta labyrinth at 10.5 dpc. Expressed in placental chorionic trophoblasts (at protein level). Expressed in a small population of epiblast cells in the distal half of the embryo at 7 dpc. Expressed in newly formed definitive endoderm cells in the proximal half of the embryo, while it is not present in extra-embryonic endoderm at 7.5 dpc. This expression pattern then changes to the ventral aspect of the developing foregut pocket and the entire hindgut pocket at 8.5 dpc, before becoming restricted to the foregut overlying the heart and the posterior-most hindgut. Not detected in endothelial precursor cells of the yolk sac at 8 dpc. Expressed in extraembryonic tissues as well as in the chorion at 8.25 dpc. Expressed in endometrial stroma of the uterus of pregnant mice at 8.5 dpc. Expressed in the developing heart, caudal neural tube and trophobasts at 9 dpc. Expressed in the chorionic plate of the chorioallantoic placenta at 9 dpc. Expressed in the posterior half of the ventral neural tube at 9.25 dpc. Expressed in trophoblast cells at the periphery of the placenta at 9.5 dpc. Expressed in collecting ducts of the kidney of pregnant mice at 10.5 dpc. Expressed in the epicardium of the developing heart at 11.5 dpc. Expressed weakly in the adult heart. Expressed in endothelial cells and fibroblasts and weakly in cardiomyocytes.

The protein resides in the secreted. It localises to the extracellular space. Its function is as follows. Peptide hormone that functions as endogenous ligand for the G-protein-coupled apelin receptor (APLNR/APJ), that plays a role in the regulation of normal cardiovascular function and fluid homeostasis. Functions as a balanced agonist activating both G(i) protein pathway and beta-arrestin pathway of APLNR. Downstream G proteins activation, apelin can inhibit cAMP production and activate key intracellular effectors such as ERKs. On the other hand, APLNR activation induces beta-arrestin recruitment to the membrane leading to desensitization and internalization of the receptor. Required for mesendodermal differentiation, blood vessels formation and heart morphogenesis during early development and for adult cardiovascular homeostasis. Acts as a motogen by promoting mesendodermal cell migration during gastrulation by binding and activating APLNR. Acts as an early embryonic regulator of cellular movement with a role in migration and development of cardiac progenitor cells. May act as a chemoattractant for the activation of angioblast migration toward the embryonic midline, i.e. the position of the future vessel formation, during vasculogenesis. Positively regulates sinus venosus (SV)-derived endothelial cells migration into the developing heart to promote coronary blood vessel sprouting. Plays a role in placental vascular development; promotes placental trophoblast invasion and spiral artery remodeling in the uterus. Involved in the regulation of maternal cardiovascular homeostasis to prevent gestational hypertension and for potent cardioprotective functions during heart failure. Mediates myocardial contractility in an ERK1/2-dependent manner. The protein is Apelin receptor early endogenous ligand of Mus musculus (Mouse).